A 474-amino-acid polypeptide reads, in one-letter code: Bifunctional protein HldE (474 aa).

The segment at 1-318 (MKLSMPRFDQ…RAVQREQGSE (318 aa)) is ribokinase. 194 to 197 (NLSE) provides a ligand contact to ATP. D263 is an active-site residue. The segment at 343 to 474 (FTNGCFDILH…AIVEKIRQKG (132 aa)) is cytidylyltransferase.

It in the N-terminal section; belongs to the carbohydrate kinase PfkB family. In the C-terminal section; belongs to the cytidylyltransferase family. In terms of assembly, homodimer.

The catalysed reaction is D-glycero-beta-D-manno-heptose 7-phosphate + ATP = D-glycero-beta-D-manno-heptose 1,7-bisphosphate + ADP + H(+). It carries out the reaction D-glycero-beta-D-manno-heptose 1-phosphate + ATP + H(+) = ADP-D-glycero-beta-D-manno-heptose + diphosphate. The protein operates within nucleotide-sugar biosynthesis; ADP-L-glycero-beta-D-manno-heptose biosynthesis; ADP-L-glycero-beta-D-manno-heptose from D-glycero-beta-D-manno-heptose 7-phosphate: step 1/4. It participates in nucleotide-sugar biosynthesis; ADP-L-glycero-beta-D-manno-heptose biosynthesis; ADP-L-glycero-beta-D-manno-heptose from D-glycero-beta-D-manno-heptose 7-phosphate: step 3/4. It functions in the pathway bacterial outer membrane biogenesis; LPS core biosynthesis. Its function is as follows. Catalyzes the phosphorylation of D-glycero-D-manno-heptose 7-phosphate at the C-1 position to selectively form D-glycero-beta-D-manno-heptose-1,7-bisphosphate. Functionally, catalyzes the ADP transfer from ATP to D-glycero-beta-D-manno-heptose 1-phosphate, yielding ADP-D-glycero-beta-D-manno-heptose. This is Bifunctional protein HldE from Pseudomonas aeruginosa (strain ATCC 15692 / DSM 22644 / CIP 104116 / JCM 14847 / LMG 12228 / 1C / PRS 101 / PAO1).